A 79-amino-acid chain; its full sequence is Sec-independent protein translocase protein TatA (79 aa).

Residues 1–21 form a helical membrane-spanning segment; the sequence is MHMPSGTQWLIILLIVVLLFG.

It belongs to the TatA/E family. In terms of assembly, the Tat system comprises two distinct complexes: a TatABC complex, containing multiple copies of TatA, TatB and TatC subunits, and a separate TatA complex, containing only TatA subunits. Substrates initially bind to the TatABC complex, which probably triggers association of the separate TatA complex to form the active translocon.

The protein localises to the cell inner membrane. In terms of biological role, part of the twin-arginine translocation (Tat) system that transports large folded proteins containing a characteristic twin-arginine motif in their signal peptide across membranes. TatA could form the protein-conducting channel of the Tat system. The polypeptide is Sec-independent protein translocase protein TatA (Campylobacter lari (strain RM2100 / D67 / ATCC BAA-1060)).